The primary structure comprises 73 residues: Cell division protein ZapB (73 aa).

Residues 3–69 (LELLSKLETK…EKVTGLVGLL (67 aa)) are a coiled coil. The interval 30-50 (EKQKSSTLSEHNQQLNEQNQQ) is disordered. Residues 41-50 (NQQLNEQNQQ) are compositionally biased toward low complexity.

This sequence belongs to the ZapB family. Homodimer. The ends of the coiled-coil dimer bind to each other, forming polymers. Interacts with FtsZ.

Its subcellular location is the cytoplasm. Non-essential, abundant cell division factor that is required for proper Z-ring formation. It is recruited early to the divisome by direct interaction with FtsZ, stimulating Z-ring assembly and thereby promoting cell division earlier in the cell cycle. Its recruitment to the Z-ring requires functional FtsA or ZipA. This Shewanella putrefaciens (strain CN-32 / ATCC BAA-453) protein is Cell division protein ZapB.